The following is a 378-amino-acid chain: Erythronate-4-phosphate dehydrogenase (378 aa).

Serine 45 and threonine 66 together coordinate substrate. 2 residues coordinate NAD(+): aspartate 146 and threonine 175. The active site involves arginine 208. Aspartate 232 lines the NAD(+) pocket. Residue glutamate 237 is part of the active site. Catalysis depends on histidine 254, which acts as the Proton donor. Residue glycine 257 participates in NAD(+) binding. Tyrosine 258 is a binding site for substrate.

This sequence belongs to the D-isomer specific 2-hydroxyacid dehydrogenase family. PdxB subfamily. In terms of assembly, homodimer.

It localises to the cytoplasm. The catalysed reaction is 4-phospho-D-erythronate + NAD(+) = (R)-3-hydroxy-2-oxo-4-phosphooxybutanoate + NADH + H(+). The protein operates within cofactor biosynthesis; pyridoxine 5'-phosphate biosynthesis; pyridoxine 5'-phosphate from D-erythrose 4-phosphate: step 2/5. In terms of biological role, catalyzes the oxidation of erythronate-4-phosphate to 3-hydroxy-2-oxo-4-phosphonooxybutanoate. In Shigella boydii serotype 4 (strain Sb227), this protein is Erythronate-4-phosphate dehydrogenase.